Here is a 145-residue protein sequence, read N- to C-terminus: 3-hydroxyacyl-[acyl-carrier-protein] dehydratase FabZ (145 aa).

His47 is a catalytic residue.

This sequence belongs to the thioester dehydratase family. FabZ subfamily.

It is found in the cytoplasm. It carries out the reaction a (3R)-hydroxyacyl-[ACP] = a (2E)-enoyl-[ACP] + H2O. Functionally, involved in unsaturated fatty acids biosynthesis. Catalyzes the dehydration of short chain beta-hydroxyacyl-ACPs and long chain saturated and unsaturated beta-hydroxyacyl-ACPs. This chain is 3-hydroxyacyl-[acyl-carrier-protein] dehydratase FabZ, found in Chromohalobacter salexigens (strain ATCC BAA-138 / DSM 3043 / CIP 106854 / NCIMB 13768 / 1H11).